A 177-amino-acid chain; its full sequence is Protein C (177 aa).

Residues 1–10 are compositionally biased toward polar residues; that stretch reads MSTKAWNASR. The tract at residues 1 to 38 is disordered; it reads MSTKAWNASRLSGPDPSTPWSLRKPLQHGSRPPKGKRL.

The protein belongs to the morbillivirus protein C family.

This Rinderpest virus (strain RBOK) (RDV) protein is Protein C (P/V/C).